The sequence spans 325 residues: Helicase VP6-A (325 aa).

2 disordered regions span residues M1–R126 and G175–I231. Composition is skewed to basic and acidic residues over residues V8–Q18, E32–E54, G61–I79, and P92–G105. Residue K106 coordinates ATP. Residues K106–G122 are compositionally biased toward gly residues. Residues G175–A229 show a composition bias toward basic and acidic residues.

This sequence belongs to the orbivirus VP6 family. In terms of assembly, homohexamer.

The protein localises to the virion. The catalysed reaction is ATP + H2O = ADP + phosphate + H(+). Functionally, ATP dependent RNA helicase essential for RNA packaging and viral transcription. Possesses ss- and dsRNA-binding capacity. This chain is Helicase VP6-A (Segment-9), found in Bluetongue virus 11 (isolate USA) (BTV 11).